A 409-amino-acid polypeptide reads, in one-letter code: Ligand-gated cation channel ZACN (409 aa).

The signal sequence occupies residues 1 to 18; the sequence is MAPRLLLLLLAFLRLGTT. Topologically, residues 19–233 are extracellular; sequence GPLVQGRGFR…LRLQNTALKA (215 aa). N-linked (GlcNAc...) asparagine glycosylation is found at asparagine 55 and asparagine 99. A disulfide bridge links cysteine 157 with cysteine 171. A helical membrane pass occupies residues 234 to 254; it reads IIALLVPGEALLLADMCGGLL. The Cytoplasmic portion of the chain corresponds to 255 to 265; the sequence is PLRATERIAYK. The chain crosses the membrane as a helical span at residues 266–286; the sequence is VTLLLGYLVFHSSLVQALPSS. The Extracellular portion of the chain corresponds to 287 to 296; the sequence is SSCNPLLIYY. Residues 297–317 form a helical membrane-spanning segment; it reads FTVLLLLLFISTMETVLLAAL. Topologically, residues 318 to 365 are cytoplasmic; sequence QARGHLSARSSPIPTPRGEQQDHGDLGPHPEEAPGVKESRSWAEAADH. Residues 325 to 354 are disordered; sequence ARSSPIPTPRGEQQDHGDLGPHPEEAPGVK. Over residues 336–354 the composition is skewed to basic and acidic residues; it reads EQQDHGDLGPHPEEAPGVK. A helical membrane pass occupies residues 366–386; it reads IFFLVYVVGVVCSQFFFIGFW. Over 387 to 409 the chain is Extracellular; that stretch reads MWATCKSDPAPGEAIPHGGQPRL.

It belongs to the ligand-gated ion channel (TC 1.A.9) family. In terms of processing, glycosylated.

The protein localises to the cell membrane. The catalysed reaction is Na(+)(in) = Na(+)(out). The enzyme catalyses K(+)(in) = K(+)(out). In terms of biological role, ligand-gated cation channel that allows the movement of sodium and potassium monoatomic cations across cell membranes when activated by zinc (Zn2+), copper (Cu2+), and changes in pH. Could also transport cesium. This is Ligand-gated cation channel ZACN from Canis lupus familiaris (Dog).